Reading from the N-terminus, the 135-residue chain is Histone H1, macronuclear (135 aa).

The segment covering 1–17 (MPAKTATAVKRTTTTKK) has biased composition (low complexity). Positions 1 to 135 (MPAKTATAVK…GGKKKSAKKN (135 aa)) are disordered. Basic residues-rich tracts occupy residues 18-54 (SAAK…RRTP) and 62-79 (KATK…RSAT). The segment covering 80–112 (KKTTAAPAAAAAPATDAPAAAATPSKATGSAKK) has biased composition (low complexity). The span at 113 to 135 (ASARKSSAKKPAKGGKKKSAKKN) shows a compositional bias: basic residues.

It localises to the nucleus. Its subcellular location is the chromosome. Its function is as follows. Histones H1 are necessary for the condensation of nucleosome chains into higher-order structures. This chain is Histone H1, macronuclear, found in Euplotes eurystomus (Ciliate).